We begin with the raw amino-acid sequence, 438 residues long: High-affinity gluconate transporter (438 aa).

The next 13 membrane-spanning stretches (helical) occupy residues 2–22 (PLVI…RFKM), 23–43 (NGFI…GMPL), 52–72 (AGVG…AMLG), 108–128 (VGFA…VFTI), 134–154 (IPLL…HGFL), 174–194 (TLLY…PVYA), 222–242 (FGVS…RAIA), 258–278 (FLGD…FTFG), 292–312 (LVSS…GGAF), 327–347 (SMMH…AAVL), 349–369 (IALG…APLI), 370–390 (ATTG…SVIF), and 418–438 (MLET…NMVI).

Belongs to the GntP permease family.

The protein resides in the cell inner membrane. Its pathway is carbohydrate acid metabolism; D-gluconate degradation. In terms of biological role, part of the gluconate utilization system Gnt-I; high-affinity intake of gluconate. The polypeptide is High-affinity gluconate transporter (gntT) (Escherichia coli (strain K12)).